We begin with the raw amino-acid sequence, 339 residues long: Biotin synthase (339 aa).

One can recognise a Radical SAM core domain in the interval 55-282; that stretch reads NAVQLSTLLS…KAVVRLSAGR (228 aa). Cys70, Cys74, and Cys77 together coordinate [4Fe-4S] cluster. Positions 114, 145, 205, and 277 each coordinate [2Fe-2S] cluster.

Belongs to the radical SAM superfamily. Biotin synthase family. Homodimer. Requires [4Fe-4S] cluster as cofactor. The cofactor is [2Fe-2S] cluster.

It catalyses the reaction (4R,5S)-dethiobiotin + (sulfur carrier)-SH + 2 reduced [2Fe-2S]-[ferredoxin] + 2 S-adenosyl-L-methionine = (sulfur carrier)-H + biotin + 2 5'-deoxyadenosine + 2 L-methionine + 2 oxidized [2Fe-2S]-[ferredoxin]. It participates in cofactor biosynthesis; biotin biosynthesis; biotin from 7,8-diaminononanoate: step 2/2. Functionally, catalyzes the conversion of dethiobiotin (DTB) to biotin by the insertion of a sulfur atom into dethiobiotin via a radical-based mechanism. This is Biotin synthase from Burkholderia ambifaria (strain ATCC BAA-244 / DSM 16087 / CCUG 44356 / LMG 19182 / AMMD) (Burkholderia cepacia (strain AMMD)).